The primary structure comprises 561 residues: Putative transport protein YbjL (561 aa).

A run of 5 helical transmembrane segments spans residues 8–28 (LLNG…LCLG), 32–52 (LGSI…LLGQ), 66–86 (FMLF…SIFF), 94–114 (MLAL…GKLF), and 158–178 (NLSL…IVGA). RCK C-terminal domains are found at residues 200–288 (RGLD…SFRN) and 292–373 (VFDR…RIGF). Helical transmembrane passes span 383 to 403 (LLAF…TFQF), 406 to 426 (FSFG…LGFM), 451 to 471 (VFMA…LGAI), 475 to 495 (MLIA…LFGA), and 540 to 560 (AIAN…WPGL).

It belongs to the AAE transporter (TC 2.A.81) family. YbjL subfamily.

It is found in the cell membrane. This chain is Putative transport protein YbjL, found in Escherichia coli O139:H28 (strain E24377A / ETEC).